A 952-amino-acid chain; its full sequence is Probable outer membrane protein pmp16 (952 aa).

The N-terminal stretch at 1-27 (MSKTPPKFLFYLGNFTACMFGMTPAVY) is a signal peptide. An Autotransporter domain is found at 646–952 (GDLATTPLWQ…HLQAGSTLKF (307 aa)).

Belongs to the PMP outer membrane protein family.

Its subcellular location is the secreted. The protein localises to the cell wall. It localises to the cell outer membrane. In Chlamydia pneumoniae (Chlamydophila pneumoniae), this protein is Probable outer membrane protein pmp16 (pmp16).